The sequence spans 207 residues: MFFVTPAYAEEAPAAATGTDAHAAPAAGEVHTETGVAEGGHARGPFPPFDSTTYASQLLWLVITFGVFYLLMQKVIAPRIGAILDQRHTRLSQDVEEAGRLKAEADAAVRTYEGELAAARAKSNAIGSAARDAAKAKAEQDRRAVEATLSEKIKAAEVRIGEIKAKAFADVGAIAEETAAAVIDQLIGGTVAKADVAAAVAAAKKEV.

A helical transmembrane segment spans residues 58–78 (LLWLVITFGVFYLLMQKVIAP).

Belongs to the ATPase B chain family. As to quaternary structure, F-type ATPases have 2 components, F(1) - the catalytic core - and F(0) - the membrane proton channel. F(1) has five subunits: alpha(3), beta(3), gamma(1), delta(1), epsilon(1). F(0) has three main subunits: a(1), b(2) and c(10-14). The alpha and beta chains form an alternating ring which encloses part of the gamma chain. F(1) is attached to F(0) by a central stalk formed by the gamma and epsilon chains, while a peripheral stalk is formed by the delta and b chains.

It is found in the cell inner membrane. F(1)F(0) ATP synthase produces ATP from ADP in the presence of a proton or sodium gradient. F-type ATPases consist of two structural domains, F(1) containing the extramembraneous catalytic core and F(0) containing the membrane proton channel, linked together by a central stalk and a peripheral stalk. During catalysis, ATP synthesis in the catalytic domain of F(1) is coupled via a rotary mechanism of the central stalk subunits to proton translocation. In terms of biological role, component of the F(0) channel, it forms part of the peripheral stalk, linking F(1) to F(0). The b'-subunit is a diverged and duplicated form of b found in plants and photosynthetic bacteria. The protein is ATP synthase subunit b 2 (atpF2) of Rhizobium johnstonii (strain DSM 114642 / LMG 32736 / 3841) (Rhizobium leguminosarum bv. viciae).